The chain runs to 231 residues: 7-cyano-7-deazaguanine synthase (231 aa).

An ATP-binding site is contributed by 8–18 (FSGGQDSTTCL). Residues C188, C197, C200, and C203 each contribute to the Zn(2+) site.

Belongs to the QueC family. Zn(2+) serves as cofactor.

It carries out the reaction 7-carboxy-7-deazaguanine + NH4(+) + ATP = 7-cyano-7-deazaguanine + ADP + phosphate + H2O + H(+). Its pathway is purine metabolism; 7-cyano-7-deazaguanine biosynthesis. In terms of biological role, catalyzes the ATP-dependent conversion of 7-carboxy-7-deazaguanine (CDG) to 7-cyano-7-deazaguanine (preQ(0)). The polypeptide is 7-cyano-7-deazaguanine synthase (Escherichia coli O1:K1 / APEC).